The following is a 209-amino-acid chain: Large ribosomal subunit protein uL3 (209 aa).

The tract at residues 113–155 is disordered; the sequence is TSRGHGYQGNIKRHHQSRGPETHGSRYHRIPGSMGSIINRVPK.

It belongs to the universal ribosomal protein uL3 family. In terms of assembly, part of the 50S ribosomal subunit. Forms a cluster with proteins L14 and L19.

Its function is as follows. One of the primary rRNA binding proteins, it binds directly near the 3'-end of the 23S rRNA, where it nucleates assembly of the 50S subunit. The sequence is that of Large ribosomal subunit protein uL3 from Lactobacillus delbrueckii subsp. bulgaricus (strain ATCC 11842 / DSM 20081 / BCRC 10696 / JCM 1002 / NBRC 13953 / NCIMB 11778 / NCTC 12712 / WDCM 00102 / Lb 14).